Here is a 542-residue protein sequence, read N- to C-terminus: Prolyl 3-hydroxylase OGFOD1 (542 aa).

In terms of domain architecture, Fe2OG dioxygenase spans 134-239 (DLESTIDMSC…RLSISGWFHG (106 aa)). Residues H155 and D157 each coordinate Fe cation. Position 169 (Y169) interacts with 2-oxoglutarate. Position 218 (H218) interacts with Fe cation. R230 provides a ligand contact to 2-oxoglutarate. The segment at 371–435 (SEDEPEDKKE…AKKESSVPTC (65 aa)) is disordered. The span at 395-417 (SHSSSEPENSWAATSDSSLQSEG) shows a compositional bias: polar residues.

Belongs to the TPA1 family. In terms of assembly, monomer. Requires Fe(2+) as cofactor. It depends on L-ascorbate as a cofactor.

The protein resides in the cytoplasm. Its subcellular location is the nucleus. The catalysed reaction is [ribosomal protein uS12]-L-proline + 2-oxoglutarate + O2 = [ribosomal protein uS12]-(3S)-3-hydroxy-L-proline + succinate + CO2. In terms of biological role, prolyl 3-hydroxylase that catalyzes 3-hydroxylation of 'Pro-62' of small ribosomal subunit uS12 (RPS23), thereby regulating protein translation termination efficiency. Involved in stress granule formation. The protein is Prolyl 3-hydroxylase OGFOD1 (OGFOD1) of Bos taurus (Bovine).